Reading from the N-terminus, the 467-residue chain is Dihydrolipoyl dehydrogenase (467 aa).

FAD contacts are provided by residues 33–41 (EPKYWGGIC), Lys50, and Gly113. An intrachain disulfide couples Cys41 to Cys46. NAD(+)-binding positions include 181–185 (GAGAI), Glu204, and 269–272 (AIGF). Residues Asp312 and Ala320 each coordinate FAD. His446 functions as the Proton acceptor in the catalytic mechanism.

This sequence belongs to the class-I pyridine nucleotide-disulfide oxidoreductase family. Homodimer. Part of the PDH complex, consisting of multiple copies of AceE (E1), DlaT (E2) and Lpd (E3), and of the BCKADH complex, consisting of multiple copies of BkdA/BkdB (E1), BkdC (E2) and Lpd (E3). It depends on FAD as a cofactor.

It is found in the cytoplasm. It catalyses the reaction N(6)-[(R)-dihydrolipoyl]-L-lysyl-[protein] + NAD(+) = N(6)-[(R)-lipoyl]-L-lysyl-[protein] + NADH + H(+). Functionally, lipoamide dehydrogenase is a component of the alpha-ketoacid dehydrogenase complexes. Catalyzes the reoxidation of dihydrolipoyl groups which are covalently attached to the lipoate acyltransferase components (E2) of the complexes. This is Dihydrolipoyl dehydrogenase (lpd) from Mycobacterium leprae (strain TN).